Consider the following 368-residue polypeptide: Quinolinate synthase (368 aa).

Iminosuccinate-binding residues include histidine 46 and serine 63. Position 110 (cysteine 110) interacts with [4Fe-4S] cluster. Iminosuccinate is bound by residues 141–143 and serine 162; that span reads YVN. Cysteine 230 is a [4Fe-4S] cluster binding site. Residues 256–258 and threonine 273 contribute to the iminosuccinate site; that span reads HPE. A [4Fe-4S] cluster-binding site is contributed by cysteine 320.

It belongs to the quinolinate synthase family. Type 3 subfamily. [4Fe-4S] cluster is required as a cofactor.

The protein resides in the cytoplasm. The catalysed reaction is iminosuccinate + dihydroxyacetone phosphate = quinolinate + phosphate + 2 H2O + H(+). It functions in the pathway cofactor biosynthesis; NAD(+) biosynthesis; quinolinate from iminoaspartate: step 1/1. Catalyzes the condensation of iminoaspartate with dihydroxyacetone phosphate to form quinolinate. This is Quinolinate synthase from Bacillus cereus (strain G9842).